The following is a 341-amino-acid chain: Anthranilate phosphoribosyltransferase (341 aa).

5-phospho-alpha-D-ribose 1-diphosphate-binding positions include glycine 82, 85 to 86 (GD), threonine 90, 92 to 95 (NIST), 110 to 118 (KHGGRSVSG), and serine 122. Glycine 82 lines the anthranilate pocket. Mg(2+) is bound at residue serine 94. An anthranilate-binding site is contributed by arginine 168. Mg(2+) is bound by residues aspartate 227 and glutamate 228.

This sequence belongs to the anthranilate phosphoribosyltransferase family. Homodimer. Mg(2+) is required as a cofactor.

The enzyme catalyses N-(5-phospho-beta-D-ribosyl)anthranilate + diphosphate = 5-phospho-alpha-D-ribose 1-diphosphate + anthranilate. Its pathway is amino-acid biosynthesis; L-tryptophan biosynthesis; L-tryptophan from chorismate: step 2/5. Its function is as follows. Catalyzes the transfer of the phosphoribosyl group of 5-phosphorylribose-1-pyrophosphate (PRPP) to anthranilate to yield N-(5'-phosphoribosyl)-anthranilate (PRA). The polypeptide is Anthranilate phosphoribosyltransferase (Nitrosomonas europaea (strain ATCC 19718 / CIP 103999 / KCTC 2705 / NBRC 14298)).